Here is a 519-residue protein sequence, read N- to C-terminus: Cytochrome P450 4A22 (519 aa).

Residues 1 to 4 (MSVS) constitute a propeptide that is removed on maturation. Glu321 is a heme binding site. Residue Ser440 is modified to Phosphoserine. Cys457 lines the heme pocket.

This sequence belongs to the cytochrome P450 family.

It localises to the endoplasmic reticulum membrane. Its subcellular location is the microsome membrane. The catalysed reaction is an omega-methyl-long-chain fatty acid + reduced [NADPH--hemoprotein reductase] + O2 = an omega-hydroxy-long-chain fatty acid + oxidized [NADPH--hemoprotein reductase] + H2O + H(+). Functionally, catalyzes the omega- and (omega-1)-hydroxylation of various fatty acids such as laurate and palmitate. Shows no activity towards arachidonic acid and prostaglandin A1. Lacks functional activity in the kidney and does not contribute to renal 20-hydroxyeicosatetraenoic acid (20-HETE) biosynthesis. This Homo sapiens (Human) protein is Cytochrome P450 4A22 (CYP4A22).